We begin with the raw amino-acid sequence, 101 residues long: Aspartyl/glutamyl-tRNA(Asn/Gln) amidotransferase subunit C (101 aa).

Residues 75–101 (QEALSGAPDAEEQRFRVPRILDEDVAS) form a disordered region. The segment covering 85–101 (EEQRFRVPRILDEDVAS) has biased composition (basic and acidic residues).

The protein belongs to the GatC family. As to quaternary structure, heterotrimer of A, B and C subunits.

It catalyses the reaction L-glutamyl-tRNA(Gln) + L-glutamine + ATP + H2O = L-glutaminyl-tRNA(Gln) + L-glutamate + ADP + phosphate + H(+). It carries out the reaction L-aspartyl-tRNA(Asn) + L-glutamine + ATP + H2O = L-asparaginyl-tRNA(Asn) + L-glutamate + ADP + phosphate + 2 H(+). Its function is as follows. Allows the formation of correctly charged Asn-tRNA(Asn) or Gln-tRNA(Gln) through the transamidation of misacylated Asp-tRNA(Asn) or Glu-tRNA(Gln) in organisms which lack either or both of asparaginyl-tRNA or glutaminyl-tRNA synthetases. The reaction takes place in the presence of glutamine and ATP through an activated phospho-Asp-tRNA(Asn) or phospho-Glu-tRNA(Gln). The protein is Aspartyl/glutamyl-tRNA(Asn/Gln) amidotransferase subunit C of Salinispora arenicola (strain CNS-205).